Reading from the N-terminus, the 880-residue chain is Alanine--tRNA ligase (880 aa).

Zn(2+) is bound by residues His-567, His-571, Cys-669, and His-673.

This sequence belongs to the class-II aminoacyl-tRNA synthetase family. Zn(2+) is required as a cofactor.

The protein resides in the cytoplasm. The catalysed reaction is tRNA(Ala) + L-alanine + ATP = L-alanyl-tRNA(Ala) + AMP + diphosphate. Functionally, catalyzes the attachment of alanine to tRNA(Ala) in a two-step reaction: alanine is first activated by ATP to form Ala-AMP and then transferred to the acceptor end of tRNA(Ala). Also edits incorrectly charged Ser-tRNA(Ala) and Gly-tRNA(Ala) via its editing domain. The sequence is that of Alanine--tRNA ligase from Bacillus mycoides (strain KBAB4) (Bacillus weihenstephanensis).